The primary structure comprises 405 residues: GTPase Obg (405 aa).

The Obg domain maps to 1 to 159 (MRFIDEAVVT…KVLKFELKVV (159 aa)). An OBG-type G domain is found at 160–333 (ADVGLIGLPN…IKYHLMNEIE (174 aa)). GTP is bound by residues 166–173 (GLPNAGKS), 191–195 (FTTLV), 213–216 (DIPG), 283–286 (NKID), and 314–316 (ATL). Serine 173 and threonine 193 together coordinate Mg(2+). Over residues 371–382 (YRAARKAAREGT) the composition is skewed to basic and acidic residues. Residues 371 to 405 (YRAARKAAREGTDLSDDDFDGSDDDDDGVEVIYAP) are disordered. Positions 383-399 (DLSDDDFDGSDDDDDGV) are enriched in acidic residues.

Belongs to the TRAFAC class OBG-HflX-like GTPase superfamily. OBG GTPase family. As to quaternary structure, monomer. Mg(2+) is required as a cofactor.

The protein resides in the cytoplasm. Its function is as follows. An essential GTPase which binds GTP, GDP and possibly (p)ppGpp with moderate affinity, with high nucleotide exchange rates and a fairly low GTP hydrolysis rate. Plays a role in control of the cell cycle, stress response, ribosome biogenesis and in those bacteria that undergo differentiation, in morphogenesis control. In Psychrobacter arcticus (strain DSM 17307 / VKM B-2377 / 273-4), this protein is GTPase Obg.